We begin with the raw amino-acid sequence, 466 residues long: Ferrochelatase-1, chloroplastic/mitochondrial (466 aa).

The segment covering 1-11 (MQATALSSGFN) has biased composition (polar residues). Positions 1–23 (MQATALSSGFNPLTKRKDHRFPR) are disordered. The transit peptide at 1–35 (MQATALSSGFNPLTKRKDHRFPRSCSQRNSLSLIQ) directs the protein to the chloroplast and mitochondrion.

The protein belongs to the ferrochelatase family. In terms of tissue distribution, expressed in roots, leaves, stems and flowers. Present in both leaves and roots.

It localises to the plastid. It is found in the chloroplast membrane. The protein resides in the chloroplast thylakoid membrane. Its subcellular location is the mitochondrion. It carries out the reaction heme b + 2 H(+) = protoporphyrin IX + Fe(2+). It functions in the pathway porphyrin-containing compound metabolism; protoheme biosynthesis; protoheme from protoporphyrin-IX: step 1/1. Its function is as follows. Catalyzes the last step of heme biosynthesis by inserting ferrous iron into protoporphyrin IX to produce protoheme. Produces heme for photosynthetic cytochromes, but does not seem to be involved in stress responses. May be involved in wound-induced supply of heme to defensive hemoproteins outside plastids. Regulates the expression of photosynthesis-associated nuclear genes in undeveloped chloroplasts through production of heme. The sequence is that of Ferrochelatase-1, chloroplastic/mitochondrial from Arabidopsis thaliana (Mouse-ear cress).